The primary structure comprises 1032 residues: Contactin-1a (1032 aa).

The first 31 residues, 1–31 (MIPEAFQPRAMKHTTTVLMLALSSRFWSVCA), serve as a signal peptide directing secretion. Ig-like C2-type domains are found at residues 46-139 (PVFE…ARVQ), 144-231 (DMFS…KSVF), 249-335 (PADI…THLY), 340-417 (PDWL…AELR), 423-510 (PSFQ…GSLS), and 515-612 (TKIT…AELV). 2 disulfide bridges follow: Cys70–Cys122 and Cys166–Cys219. 3 N-linked (GlcNAc...) asparagine glycosylation sites follow: Asn119, Asn216, and Asn266. Cystine bridges form between Cys271/Cys319, Cys361/Cys401, and Cys446/Cys494. N-linked (GlcNAc...) asparagine glycosylation is found at Asn455, Asn467, Asn483, and Asn504. Cys536 and Cys596 are oxidised to a cystine. Asn604 carries N-linked (GlcNAc...) asparagine glycosylation. Fibronectin type-III domains follow at residues 619–718 (PPGG…TREA), 723–820 (APSD…SAQD), 825–918 (APII…TKKS), and 920–1015 (PSRP…APAP). Positions 699 to 729 (NTLGTGPPSEPSPKTTTREARPIVAPSDIGG) are disordered. An N-linked (GlcNAc...) asparagine glycan is attached at Asn879. A disordered region spans residues 907–926 (ASQRNRIYTKKSPPSRPPKI). Asn950 is a glycosylation site (N-linked (GlcNAc...) asparagine). Gly1010 carries GPI-anchor amidated glycine lipidation. A propeptide spans 1011–1032 (SAPAPALASALLLLPLLWTLML) (removed in mature form).

Belongs to the immunoglobulin superfamily. Contactin family. As to expression, expressed in brain.

The protein localises to the cell membrane. Functionally, mediates cell surface interactions during nervous system development. In Danio rerio (Zebrafish), this protein is Contactin-1a (cntn1a).